The following is an 895-amino-acid chain: Serine-rich coiled-coil domain-containing protein 1 (895 aa).

Disordered regions lie at residues 1 to 142 (MGDS…KEPS), 154 to 177 (SGRSEGDDSGFTEEQSRRSIKQST), 332 to 394 (ELHS…RTLG), and 459 to 497 (RSSSEGTAGSSRMVLKPKDGHVEASSLRKHRTGSSSSKM). Residues 43-56 (SSSPSSTNSSSGST) show a composition bias toward low complexity. A compositionally biased stretch (polar residues) spans 83-102 (TEQNLSISNGAQPSHSNMQK). Basic and acidic residues predominate over residues 131–142 (LTEDFEREKEPS). Over residues 348-358 (SLQSTELSVGN) the composition is skewed to polar residues. A coiled-coil region spans residues 675 to 705 (MLRLQLKDRDELISQLQAELEKVQHLQKAFA). A disordered region spans residues 731 to 753 (QGGRETTHRNRTMSQSHSTRDRK).

The protein belongs to the CCSER family.

This is Serine-rich coiled-coil domain-containing protein 1 (Ccser1) from Mus musculus (Mouse).